We begin with the raw amino-acid sequence, 361 residues long: NAD(P)H-quinone oxidoreductase subunit 1, chloroplastic (361 aa).

Transmembrane regions (helical) follow at residues 25–45, 102–122, 125–145, 246–266, 298–318, and 334–354; these read IWLL…VLVI, VAVV…HLVL, LSIG…GLLM, YSGI…LVSS, VFGT…FLFI, and LLNL…LLTT.

The protein belongs to the complex I subunit 1 family. In terms of assembly, NDH is composed of at least 16 different subunits, 5 of which are encoded in the nucleus.

Its subcellular location is the plastid. It localises to the chloroplast thylakoid membrane. It catalyses the reaction a plastoquinone + NADH + (n+1) H(+)(in) = a plastoquinol + NAD(+) + n H(+)(out). The catalysed reaction is a plastoquinone + NADPH + (n+1) H(+)(in) = a plastoquinol + NADP(+) + n H(+)(out). In terms of biological role, NDH shuttles electrons from NAD(P)H:plastoquinone, via FMN and iron-sulfur (Fe-S) centers, to quinones in the photosynthetic chain and possibly in a chloroplast respiratory chain. The immediate electron acceptor for the enzyme in this species is believed to be plastoquinone. Couples the redox reaction to proton translocation, and thus conserves the redox energy in a proton gradient. This Nymphaea alba (White water-lily) protein is NAD(P)H-quinone oxidoreductase subunit 1, chloroplastic.